A 185-amino-acid chain; its full sequence is MGGLWSMVLPVLSDQKNPNRSPLMSDIAQKVEALAIQAAKTEDCEVVEVIYRREGGVYVVRVAADKLPDDQGQERHISLDECGSISRQISSLLDVHDVIPNAYHLEVSSPGIERPLIKDGDFTRFAGKLVEIRTYQPMDTESGPRKKFRGTLLGLQEAMVVVAEANGEVRIPWEQVAKAHLTFDF.

It belongs to the RimP family.

It is found in the cytoplasm. Its function is as follows. Required for maturation of 30S ribosomal subunits. The protein is Ribosome maturation factor RimP of Magnetococcus marinus (strain ATCC BAA-1437 / JCM 17883 / MC-1).